We begin with the raw amino-acid sequence, 298 residues long: Oxidoreductase YdhF (298 aa).

The Proton donor role is filled by Y55. Residues 158 to 159 (SN), 209 to 220 (WSCLGGGRLFND), and 263 to 264 (SG) each bind NADP(+).

Belongs to the aldo/keto reductase family. Aldo/keto reductase 2 subfamily.

May function as oxidoreductase. The chain is Oxidoreductase YdhF (ydhF) from Escherichia coli (strain K12).